The following is a 146-amino-acid chain: 3-hydroxyacyl-[acyl-carrier-protein] dehydratase FabZ (146 aa).

Residue His49 is part of the active site.

Belongs to the thioester dehydratase family. FabZ subfamily.

It localises to the cytoplasm. The enzyme catalyses a (3R)-hydroxyacyl-[ACP] = a (2E)-enoyl-[ACP] + H2O. Involved in unsaturated fatty acids biosynthesis. Catalyzes the dehydration of short chain beta-hydroxyacyl-ACPs and long chain saturated and unsaturated beta-hydroxyacyl-ACPs. In Pseudomonas syringae pv. tomato (strain ATCC BAA-871 / DC3000), this protein is 3-hydroxyacyl-[acyl-carrier-protein] dehydratase FabZ.